The primary structure comprises 231 residues: Sugar fermentation stimulation protein homolog (231 aa).

It belongs to the SfsA family.

The protein is Sugar fermentation stimulation protein homolog of Geotalea uraniireducens (strain Rf4) (Geobacter uraniireducens).